Here is a 246-residue protein sequence, read N- to C-terminus: Peptide methionine sulfoxide reductase (246 aa).

The active-site Cysteine sulfenic acid (-SOH) intermediate is Cys48. A disulfide bridge links Cys48 with Cys246.

Post-translationally, conjugated to URM1, a ubiquitin-like protein.

The enzyme catalyses L-methionyl-[protein] + [thioredoxin]-disulfide + H2O = L-methionyl-(S)-S-oxide-[protein] + [thioredoxin]-dithiol. It catalyses the reaction [thioredoxin]-disulfide + L-methionine + H2O = L-methionine (S)-S-oxide + [thioredoxin]-dithiol. Its function is as follows. Has an important function as a repair enzyme for proteins that have been inactivated by oxidation. Catalyzes the reduction of methionine sulfoxide in proteins to methionine. Does not catalyze the reverse reaction involving the oxidation of methionine residues. This is Peptide methionine sulfoxide reductase from Drosophila melanogaster (Fruit fly).